The following is a 422-amino-acid chain: L-threonine dehydratase biosynthetic IlvA (422 aa).

At Lys56 the chain carries N6-(pyridoxal phosphate)lysine. Pyridoxal 5'-phosphate is bound by residues Asn83, 189–193 (GGGGL), and Ser315. One can recognise an ACT-like domain in the interval 339–413 (HYFILNFPQR…FDPSNIYINE (75 aa)).

It belongs to the serine/threonine dehydratase family. Homotetramer. It depends on pyridoxal 5'-phosphate as a cofactor.

The catalysed reaction is L-threonine = 2-oxobutanoate + NH4(+). The protein operates within amino-acid biosynthesis; L-isoleucine biosynthesis; 2-oxobutanoate from L-threonine: step 1/1. Functionally, catalyzes the anaerobic formation of alpha-ketobutyrate and ammonia from threonine in a two-step reaction. The first step involved a dehydration of threonine and a production of enamine intermediates (aminocrotonate), which tautomerizes to its imine form (iminobutyrate). Both intermediates are unstable and short-lived. The second step is the nonenzymatic hydrolysis of the enamine/imine intermediates to form 2-ketobutyrate and free ammonia. In the low water environment of the cell, the second step is accelerated by RidA. The protein is L-threonine dehydratase biosynthetic IlvA (ilvA) of Staphylococcus epidermidis (strain ATCC 12228 / FDA PCI 1200).